Here is a 164-residue protein sequence, read N- to C-terminus: NADPH-dependent 7-cyano-7-deazaguanine reductase (164 aa).

C55 (thioimide intermediate) is an active-site residue. D62 acts as the Proton donor in catalysis. Substrate-binding positions include 77 to 79 and 96 to 97; these read VES and HE.

The protein belongs to the GTP cyclohydrolase I family. QueF type 1 subfamily.

It is found in the cytoplasm. The catalysed reaction is 7-aminomethyl-7-carbaguanine + 2 NADP(+) = 7-cyano-7-deazaguanine + 2 NADPH + 3 H(+). It functions in the pathway tRNA modification; tRNA-queuosine biosynthesis. Catalyzes the NADPH-dependent reduction of 7-cyano-7-deazaguanine (preQ0) to 7-aminomethyl-7-deazaguanine (preQ1). The polypeptide is NADPH-dependent 7-cyano-7-deazaguanine reductase (Bacillus velezensis (strain DSM 23117 / BGSC 10A6 / LMG 26770 / FZB42) (Bacillus amyloliquefaciens subsp. plantarum)).